A 102-amino-acid chain; its full sequence is MSARVRSRSRGRGDGQEAPDVVAFVAPGESQQEEPPTDNQDIEPGQEREGTPPIEERKVEGDCQEMDLEKTRSERGDGSDVKEKTPPNPKHAKTKEAGDGQP.

A compositionally biased stretch (basic residues) spans 1-10 (MSARVRSRSR). The interval 1–102 (MSARVRSRSR…KTKEAGDGQP (102 aa)) is disordered. Phosphoserine; by CLK2 is present on Ser-7. A Phosphoserine; by HIPK1 and CLK2 modification is found at Ser-9. Over residues 45 to 85 (GQEREGTPPIEERKVEGDCQEMDLEKTRSERGDGSDVKEKT) the composition is skewed to basic and acidic residues. Thr-51 is modified (phosphothreonine; by HIPK1 and CLK2). Position 71 is a phosphothreonine; by CLK2 (Thr-71). Residues Ser-73 and Ser-79 each carry the phosphoserine; by CLK2 modification. 2 positions are modified to phosphothreonine; by CLK2: Thr-85 and Thr-94.

It belongs to the GAGE family. Interacts with JUN. HIPK1-mediated phosphorylation at Thr-51 leads to the compaction of its intrinsically disordered conformation and is critical for its ability to potentiate the transcriptional activator activity of JUN inspite of a reduced interaction with JUN. CLK2-mediated phosphorylation at multiple Ser and Thr residues attenuates its ability to potentiate JUN transcriptional activator activity. Expressed at basal lvels in the adult normal prostate gland but is highly up-regulated in the fetal prostate and prostate cancer cells. Preferentially expressed in normal male and female reproductive tissues, testis, fallopian tube, uterus, and placenta, as well as in testicular cancer, uterine cancer, cervical cancer and kidney cancer.

Its subcellular location is the cytoplasm. It is found in the nucleus. The protein resides in the mitochondrion. Intrinsically disordered protein that potentiates the transcriptional activator activity of JUN. Protects cells from stress-induced apoptosis by inhibiting reactive oxygen species (ROS) production and via regulation of the MAPK signaling pathway. The protein is P antigen family member 4 (PAGE4) of Homo sapiens (Human).